We begin with the raw amino-acid sequence, 535 residues long: MELRSELPSVPGAATAAATATGPPVASVASVAAAAAAAASLPVSVAGGLLRAPPLLLRAAEKYPRTPKCARCRNHGVVSALKGHKRYCRWKDCLCAKCTLIAERQRVMAAQVALRRQQAQEENEARELQLLYGTAEGLALAAANGIIPPRPAYEVFGSVCAADGGGPGAGAPAGTGGGAAGAGSSEAKLQKFDLFPKTLLQAGRPGSPQPQPGKPLSPDGADSGPGTSSPEVRPGSGSENGDGESFSGSPLARASKEAGGSCPGSAGPGGGGEEDSPGSASPLGSESGSEADKEEAEASPAPGLGGGPGPRQRTPLDILTRVFPGHRRGVLELVLQGCGGDVVQAIEQVLNHHRGGLAAGLGPTVPPDKAAVGAVGAADDAWPGRVDAAAAGGPGLPAPLQAGPAAPPHHRPLLAGAMAPGALGSLSSRSAFSPLQPNASHFGADAGAYPLGAPLGLSPLRLAYSAAAAHSRGLAFMAPYSTAGLVPTLGFRPPMDYAFSDLMRDRSAAAAAVHKEPTYGGGLYGPMVNGAPEKQ.

Positions 69–116 (CARCRNHGVVSALKGHKRYCRWKDCLCAKCTLIAERQRVMAAQVALRR) form a DNA-binding region, DM. The tract at residues 200–315 (LQAGRPGSPQ…GGPGPRQRTP (116 aa)) is disordered. The 36-residue stretch at 313 to 348 (RTPLDILTRVFPGHRRGVLELVLQGCGGDVVQAIEQ) folds into the DMA domain.

This sequence belongs to the DMRT family.

The protein localises to the nucleus. In terms of biological role, may be involved in sexual development. This chain is Doublesex- and mab-3-related transcription factor A2 (DMRTA2), found in Bos taurus (Bovine).